The sequence spans 351 residues: Protein-glutamate methylesterase/protein-glutamine glutaminase 2 (351 aa).

In terms of domain architecture, Response regulatory spans 4 to 121 (KVLVVDDSAL…PQDFNEYQDL (118 aa)). D55 is subject to 4-aspartylphosphate. One can recognise a CheB-type methylesterase domain in the interval 156–348 (RVINTQLVAI…DKMLNYLASL (193 aa)). Catalysis depends on residues S168, H194, and D290.

The protein belongs to the CheB family. Phosphorylated by CheA. Phosphorylation of the N-terminal regulatory domain activates the methylesterase activity.

Its subcellular location is the cytoplasm. The enzyme catalyses [protein]-L-glutamate 5-O-methyl ester + H2O = L-glutamyl-[protein] + methanol + H(+). It carries out the reaction L-glutaminyl-[protein] + H2O = L-glutamyl-[protein] + NH4(+). In terms of biological role, involved in chemotaxis. Part of a chemotaxis signal transduction system that modulates chemotaxis in response to various stimuli. Catalyzes the demethylation of specific methylglutamate residues introduced into the chemoreceptors (methyl-accepting chemotaxis proteins or MCP) by CheR. Also mediates the irreversible deamidation of specific glutamine residues to glutamic acid. This chain is Protein-glutamate methylesterase/protein-glutamine glutaminase 2, found in Shewanella sp. (strain MR-7).